A 359-amino-acid polypeptide reads, in one-letter code: Histidinol-phosphate aminotransferase (359 aa).

N6-(pyridoxal phosphate)lysine is present on K217.

The protein belongs to the class-II pyridoxal-phosphate-dependent aminotransferase family. Histidinol-phosphate aminotransferase subfamily. As to quaternary structure, homodimer. The cofactor is pyridoxal 5'-phosphate.

It carries out the reaction L-histidinol phosphate + 2-oxoglutarate = 3-(imidazol-4-yl)-2-oxopropyl phosphate + L-glutamate. It functions in the pathway amino-acid biosynthesis; L-histidine biosynthesis; L-histidine from 5-phospho-alpha-D-ribose 1-diphosphate: step 7/9. The polypeptide is Histidinol-phosphate aminotransferase (Roseobacter denitrificans (strain ATCC 33942 / OCh 114) (Erythrobacter sp. (strain OCh 114))).